Consider the following 183-residue polypeptide: Large ribosomal subunit protein uL10 (183 aa).

The protein belongs to the universal ribosomal protein uL10 family. As to quaternary structure, part of the ribosomal stalk of the 50S ribosomal subunit. The N-terminus interacts with L11 and the large rRNA to form the base of the stalk. The C-terminus forms an elongated spine to which L12 dimers bind in a sequential fashion forming a multimeric L10(L12)X complex.

Forms part of the ribosomal stalk, playing a central role in the interaction of the ribosome with GTP-bound translation factors. The sequence is that of Large ribosomal subunit protein uL10 from Mesomycoplasma hyopneumoniae (strain 7448) (Mycoplasma hyopneumoniae).